The following is a 962-amino-acid chain: Activity-dependent neuroprotective protein 2a (962 aa).

The segment at 75-98 (LCCSLCWYSSRSVPTFRSHIHRCH) adopts a C2H2-type 1 zinc-finger fold. The C2H2-type 2; degenerate zinc-finger motif lies at 108–130 (LMCPYCPFVSSPKVTEQHIQFFH). The C2H2-type 3; degenerate zinc finger occupies 165–188 (YTCATCGYHDSLLYVMKKHVLVNH). The C2H2-type 4 zinc finger occupies 219-244 (YHCKLCKLPAETIEHLLYHILSSEKH). The C2H2-type 5; degenerate zinc-finger motif lies at 527-547 (VKCLRCKILLTEQGIFQHLLH). 2 C2H2-type zinc fingers span residues 549 to 572 (LKCL…KKEH) and 650 to 673 (NACP…QTKH). The segment at 688 to 712 (YKCIYCFGVYTEKSTPKTISIHVQR) adopts a C2H2-type 8; degenerate zinc-finger fold. The interval 753–781 (QGAPEFPKPKKEAVTPRNRRRNTKASKTG) is disordered. The homeobox DNA-binding region spans 795-854 (PMGMERTSFEDRKDFLSQYFHRKPYVTKTEIELLASRLWINKADVKAHFNSKLTKCLKAI).

The protein resides in the nucleus. Functionally, may be involved in transcriptional regulation. Required for progression through late erythroid differentiation. May be involved in vasculogenesis. In Danio rerio (Zebrafish), this protein is Activity-dependent neuroprotective protein 2a.